A 484-amino-acid polypeptide reads, in one-letter code: UDP-N-acetylmuramoyl-L-alanyl-D-glutamate--2,6-diaminopimelate ligase (484 aa).

Serine 29 lines the UDP-N-acetyl-alpha-D-muramoyl-L-alanyl-D-glutamate pocket. 108 to 114 (GTSGKTS) provides a ligand contact to ATP. UDP-N-acetyl-alpha-D-muramoyl-L-alanyl-D-glutamate is bound by residues 150 to 151 (TT), serine 177, glutamine 183, and arginine 185. Lysine 217 bears the N6-carboxylysine mark. Meso-2,6-diaminopimelate contacts are provided by residues arginine 381, 405–408 (DNPR), glycine 453, and glutamate 457. A Meso-diaminopimelate recognition motif motif is present at residues 405–408 (DNPR).

Belongs to the MurCDEF family. MurE subfamily. Requires Mg(2+) as cofactor. In terms of processing, carboxylation is probably crucial for Mg(2+) binding and, consequently, for the gamma-phosphate positioning of ATP.

It is found in the cytoplasm. The enzyme catalyses UDP-N-acetyl-alpha-D-muramoyl-L-alanyl-D-glutamate + meso-2,6-diaminopimelate + ATP = UDP-N-acetyl-alpha-D-muramoyl-L-alanyl-gamma-D-glutamyl-meso-2,6-diaminopimelate + ADP + phosphate + H(+). The protein operates within cell wall biogenesis; peptidoglycan biosynthesis. Functionally, catalyzes the addition of meso-diaminopimelic acid to the nucleotide precursor UDP-N-acetylmuramoyl-L-alanyl-D-glutamate (UMAG) in the biosynthesis of bacterial cell-wall peptidoglycan. The protein is UDP-N-acetylmuramoyl-L-alanyl-D-glutamate--2,6-diaminopimelate ligase of Mesorhizobium japonicum (strain LMG 29417 / CECT 9101 / MAFF 303099) (Mesorhizobium loti (strain MAFF 303099)).